Consider the following 505-residue polypeptide: Maturase K (505 aa).

It belongs to the intron maturase 2 family. MatK subfamily.

Its subcellular location is the plastid. The protein localises to the chloroplast. In terms of biological role, usually encoded in the trnK tRNA gene intron. Probably assists in splicing its own and other chloroplast group II introns. This is Maturase K from Kunzea capitata (Pink kunzea).